The primary structure comprises 1054 residues: Translation initiation factor IF-2 (1054 aa).

Disordered regions lie at residues 57–213, 225–248, 287–315, and 401–436; these read DKRK…AASC, DPLALNSSPQSSAAFCPDARNPGD, SGRPRAASRRTAVQRPSGRAGAGASHGLQ, and DHAGRGRELVDVSKNKDKSPRKRGGPNDTSISKQEL. Residues 92-104 show a composition bias toward polar residues; the sequence is QEPSQAASDVSSP. Low complexity predominate over residues 111-213; the sequence is EASGAEAAAS…VTSGRRAASC (103 aa). A compositionally biased stretch (basic and acidic residues) spans 401–418; the sequence is DHAGRGRELVDVSKNKDK. The 170-residue stretch at 552-721 folds into the tr-type G domain; sequence TRPPVVTVMG…VLQAEVLELT (170 aa). Residues 561-568 form a G1 region; that stretch reads GHVDHGKT. 561–568 lines the GTP pocket; it reads GHVDHGKT. Residues 586–590 form a G2 region; that stretch reads GITQH. The tract at residues 607-610 is G3; it reads DTPG. GTP-binding positions include 607–611 and 661–664; these read DTPGH and NKMD. The interval 661-664 is G4; that stretch reads NKMD. The G5 stretch occupies residues 697–699; it reads SAK.

It belongs to the TRAFAC class translation factor GTPase superfamily. Classic translation factor GTPase family. IF-2 subfamily.

It localises to the cytoplasm. Its function is as follows. One of the essential components for the initiation of protein synthesis. Protects formylmethionyl-tRNA from spontaneous hydrolysis and promotes its binding to the 30S ribosomal subunits. Also involved in the hydrolysis of GTP during the formation of the 70S ribosomal complex. This chain is Translation initiation factor IF-2 (infB), found in Stigmatella aurantiaca.